The primary structure comprises 331 residues: Flavonol synthase 1 (331 aa).

The Fe2OG dioxygenase domain occupies Asp-191 to Pro-292. Positions 217, 219, and 273 each coordinate Fe cation. Residue Arg-283 coordinates 2-oxoglutarate.

This sequence belongs to the iron/ascorbate-dependent oxidoreductase family. The cofactor is L-ascorbate. It depends on Fe(2+) as a cofactor. Expressed in young cromes.

The catalysed reaction is a (2R,3R)-dihydroflavonol + 2-oxoglutarate + O2 = a flavonol + succinate + CO2 + H2O. It catalyses the reaction (2R,3R)-dihydrokaempferol + 2-oxoglutarate + O2 = kaempferol + succinate + CO2 + H2O + H(+). It carries out the reaction (2R,3R)-dihydroquercetin + 2-oxoglutarate + O2 = quercetin + succinate + CO2 + H2O + H(+). The enzyme catalyses (2R,3R)-dihydromyricetin + 2-oxoglutarate + O2 = myricetin + succinate + CO2 + H2O + H(+). Its pathway is flavonoid metabolism. Its function is as follows. Catalyzes the formation of flavonols from dihydroflavonols. Can act on dihydrokaempferol to produce kaempferol, on dihydroquercetin to produce quercitin and on dihydromyricetin to produce myricetin. The sequence is that of Flavonol synthase 1 from Crocosmia x crocosmiiflora (Montbretia).